Here is a 158-residue protein sequence, read N- to C-terminus: 3-hydroxyacyl-[acyl-carrier-protein] dehydratase FabZ (158 aa).

Residue histidine 61 is part of the active site.

Belongs to the thioester dehydratase family. FabZ subfamily.

Its subcellular location is the cytoplasm. It carries out the reaction a (3R)-hydroxyacyl-[ACP] = a (2E)-enoyl-[ACP] + H2O. Involved in unsaturated fatty acids biosynthesis. Catalyzes the dehydration of short chain beta-hydroxyacyl-ACPs and long chain saturated and unsaturated beta-hydroxyacyl-ACPs. In Methylobacterium radiotolerans (strain ATCC 27329 / DSM 1819 / JCM 2831 / NBRC 15690 / NCIMB 10815 / 0-1), this protein is 3-hydroxyacyl-[acyl-carrier-protein] dehydratase FabZ.